Reading from the N-terminus, the 574-residue chain is Fusion glycoprotein F0 (574 aa).

Positions 1–25 are cleaved as a signal peptide; sequence MELPILKTNAITAILAAVTLCFASS. Residues 26 to 524 lie on the Extracellular side of the membrane; that stretch reads QNITEEFYQS…NVNAGKSTTN (499 aa). Asn27 and Asn70 each carry an N-linked (GlcNAc...) asparagine; by host glycan. Cystine bridges form between Cys37/Cys439, Cys69/Cys212, Cys313/Cys343, Cys322/Cys333, Cys358/Cys367, Cys382/Cys393, and Cys416/Cys422. The stretch at 76-96 forms a coiled coil; that stretch reads VKLIKQELDKYKSAVTELQLL. N-linked (GlcNAc...) asparagine; by host glycans are attached at residues Asn116, Asn120, and Asn126. A fusion peptide region spans residues 137–157; that stretch reads FLGFLLGVGSAIASGIAVSKV. Residues 153–209 adopt a coiled-coil conformation; it reads AVSKVLHLEGEVNKIKSALLSTNKAVVSLSNGVSVLTSKVLDLKNYIDKQLLPIVNK. The stretch at 481–516 forms a coiled coil; the sequence is LVFPSDEFDASISQVNEKINQSLAFIRKSDELLHNV. The N-linked (GlcNAc...) asparagine; by host glycan is linked to Asn500. The chain crosses the membrane as a helical span at residues 525 to 550; it reads IMITTIIIVIIVILLSLIAVGLLLYC. Residue Cys550 is the site of S-palmitoyl cysteine; by host attachment. The Cytoplasmic segment spans residues 551–574; the sequence is KARSTPVTLSKDQLSGINNIAFSN.

Belongs to the paramyxoviruses fusion glycoprotein family. As to quaternary structure, homotrimer. Heterodimer with fusion protein F2; disulfide-linked. Interacts with host NCL; this interaction plays a role in viral entry into the host cell. As a heterodimer with F2, interacts with host heparan sulfate. As a heterodimer with F2, interacts with host IGF1R; this interaction activates PRKCZ/PKCzeta that recruits NCL/nucleolin from the host nucleus to the plasma membrane. Part of a complex composed of F1, F2 and G glycoproteins. As a heterodimer with F2, interacts with host RHOA; this interaction facilitates virus-induced syncytium formation. In terms of assembly, homotrimer. Heterodimer with fusion protein F1; disulfide-linked. As a heterodimer with F1, interacts with host heparan sulfate. As a heterodimer with F1, interacts with host IGF1R; this interaction activates PRKCZ/PKCzeta that recruits NCL/nucleolin from the host nucleus to the plasma membrane. Part of a complex composed of F1, F2 and G glycoproteins. As a heterodimer with F1, interacts with host RHOA; this interaction facilitates virus-induced syncytium formation. In terms of processing, the F glycoprotein is synthesized as a F0 inactive precursor that is heavily N-glycosylated and processed at two sites by a host furin-like protease probably in the Golgi. The cleavage site between p27 and F1 may occur after endocytosis to yield the mature F1 and F2 proteins. Both cleavages are required for membrane fusion and p27 is released from the processed protein.

Its subcellular location is the host Golgi apparatus membrane. It is found in the virion membrane. The protein localises to the host cell membrane. Inactive precursor that is cleaved at two sites by a furin-like protease to give rise to the mature F1 and F2 fusion glycoproteins. Its function is as follows. Class I viral fusion protein. Under the current model, the protein has at least 3 conformational states: pre-fusion native state, pre-hairpin intermediate state, and post-fusion hairpin state. During viral and plasma cell membrane fusion, the coiled coil regions assume a trimer-of-hairpins structure, positioning the fusion peptide in close proximity to the C-terminal region of the ectodomain. The formation of this structure appears to drive apposition and subsequent fusion of viral and cellular membranes leading to delivery of the nucleocapsid into the cytoplasm. This fusion is pH independent and occurs at the plasma or endosomal membrane. The trimer of F1-F2 (F protein) also facilitates the attachment to host cell by binding to host heparan sulfate. F protein is involved in the entry into the host cell through the interaction with host IGF1R. This interaction activates PRKCZ/PKCzeta that recruits host NCL/nucleolin to the apical cell surface where it can bind fusion glycoprotein F1. Later in infection, F protein expressed at the plasma membrane of infected cells can mediate fusion with adjacent cells to form syncytia, a cytopathic effect that could lead to tissue necrosis. F protein may trigger p53-dependent apoptosis. Functionally, major determinant of the species specificity of RSV infection. The trimer of F1-F2 (F protein) also facilitates the attachment to host cell by binding to host heparan sulfate. F protein is involved in the entry into the host cell through the interaction with host IGF1R. This interaction activates PRKCZ/PKCzeta that recruits host NCL/nucleolin to the apical cell surface where it can bind fusion glycoprotein F1. Later in infection, F protein expressed at the plasma membrane of infected cells can mediate fusion with adjacent cells to form syncytia, a cytopathic effect that could lead to tissue necrosis. F protein seems to trigger p53-dependent apoptosis. The sequence is that of Fusion glycoprotein F0 (F) from Human respiratory syncytial virus A (strain RSS-2).